We begin with the raw amino-acid sequence, 314 residues long: PDZ domain-containing protein GIPC2 (314 aa).

The span at 1–12 (MPLGLRGKKKAA) shows a compositional bias: basic residues. Residues 1–36 (MPLGLRGKKKAAKSKETARLVEGERSGGSQGVPGPP) form a disordered region. Over residues 13 to 25 (KSKETARLVEGER) the composition is skewed to basic and acidic residues. Residues 117–197 (EVNVYKSEDS…EELFTLQLIE (81 aa)) form the PDZ domain.

It belongs to the GIPC family. Probably interacts with SEMA5A.

The protein resides in the cytoplasm. This chain is PDZ domain-containing protein GIPC2 (Gipc2), found in Rattus norvegicus (Rat).